The primary structure comprises 135 residues: Auxin-responsive protein SAUR66 (135 aa).

It belongs to the ARG7 family.

The protein resides in the cell membrane. May promote auxin-stimulated organ elongation, such as hypocotyls, stamen filaments and petals. This chain is Auxin-responsive protein SAUR66, found in Arabidopsis thaliana (Mouse-ear cress).